We begin with the raw amino-acid sequence, 158 residues long: 2-C-methyl-D-erythritol 2,4-cyclodiphosphate synthase (158 aa).

The a divalent metal cation site is built by D9 and H11. Residues 9–11 (DVH) and 35–36 (HS) each bind 4-CDP-2-C-methyl-D-erythritol 2-phosphate. H43 provides a ligand contact to a divalent metal cation. Residues 57-59 (DIG), 62-66 (FPDTD), 133-136 (TTTE), F140, and R143 contribute to the 4-CDP-2-C-methyl-D-erythritol 2-phosphate site.

Belongs to the IspF family. As to quaternary structure, homotrimer. A divalent metal cation is required as a cofactor.

The enzyme catalyses 4-CDP-2-C-methyl-D-erythritol 2-phosphate = 2-C-methyl-D-erythritol 2,4-cyclic diphosphate + CMP. It participates in isoprenoid biosynthesis; isopentenyl diphosphate biosynthesis via DXP pathway; isopentenyl diphosphate from 1-deoxy-D-xylulose 5-phosphate: step 4/6. In terms of biological role, involved in the biosynthesis of isopentenyl diphosphate (IPP) and dimethylallyl diphosphate (DMAPP), two major building blocks of isoprenoid compounds. Catalyzes the conversion of 4-diphosphocytidyl-2-C-methyl-D-erythritol 2-phosphate (CDP-ME2P) to 2-C-methyl-D-erythritol 2,4-cyclodiphosphate (ME-CPP) with a corresponding release of cytidine 5-monophosphate (CMP). The polypeptide is 2-C-methyl-D-erythritol 2,4-cyclodiphosphate synthase (Haemophilus influenzae (strain 86-028NP)).